Reading from the N-terminus, the 423-residue chain is UDP-N-acetylglucosamine 1-carboxyvinyltransferase 1 (423 aa).

23 to 24 (KN) serves as a coordination point for phosphoenolpyruvate. R96 contributes to the UDP-N-acetyl-alpha-D-glucosamine binding site. C120 (proton donor) is an active-site residue. C120 is modified (2-(S-cysteinyl)pyruvic acid O-phosphothioketal). Positions 309 and 331 each coordinate UDP-N-acetyl-alpha-D-glucosamine.

The protein belongs to the EPSP synthase family. MurA subfamily.

It localises to the cytoplasm. The enzyme catalyses phosphoenolpyruvate + UDP-N-acetyl-alpha-D-glucosamine = UDP-N-acetyl-3-O-(1-carboxyvinyl)-alpha-D-glucosamine + phosphate. It functions in the pathway cell wall biogenesis; peptidoglycan biosynthesis. Its function is as follows. Cell wall formation. Adds enolpyruvyl to UDP-N-acetylglucosamine. This chain is UDP-N-acetylglucosamine 1-carboxyvinyltransferase 1, found in Streptococcus pyogenes serotype M3 (strain ATCC BAA-595 / MGAS315).